A 523-amino-acid polypeptide reads, in one-letter code: Probable aminopeptidase NPEPL1 (523 aa).

Positions 260 and 265 each coordinate Zn(2+). K272 is an active-site residue. Zn(2+) is bound by residues D283, D342, and E344. R346 is a catalytic residue.

Belongs to the peptidase M17 family. It depends on Zn(2+) as a cofactor. The cofactor is Mn(2+). Ubiquitously expressed.

Its function is as follows. Probably catalyzes the removal of unsubstituted N-terminal amino acids from various peptides. The sequence is that of Probable aminopeptidase NPEPL1 (NPEPL1) from Homo sapiens (Human).